We begin with the raw amino-acid sequence, 114 residues long: Ghrelin (114 aa).

The N-terminal stretch at 1 to 24 (MNFGKAAIFGVVLFCLLWTEGAQA) is a signal peptide. Thr-27 is lipidated: O-decanoyl threonine; alternate. The O-octanoyl threonine; alternate moiety is linked to residue Thr-27. A propeptide spans 55–114 (GVEDDLAGEEIGVTFPLDMKMTQEQFQKQRAAVQDFLYSSLLSLGSVQDTEDKNENPQSQ) (removed in mature form).

This sequence belongs to the motilin family. In terms of processing, O-octanoylated by GOAT/MBOAT4. O-octanoylation or O-decanoylation is essential for activity. The O-decanoylated form ghrelin-27-C10 differs in the length of the carbon backbone of the carboxylic acid bound to Thr-27. 33% of frog ghrelin is O-decanoylated. Post-translationally, 80% of frog ghrelin has Asn-52 cleaved from its C-terminus giving rise to ghrelin-27. In terms of tissue distribution, high levels in stomach. Moderate levels in small intestine, pancreas and testis. Low levels in heart, lung and gall bladder.

The protein resides in the secreted. Its function is as follows. Ligand for growth hormone secretagogue receptor type 1 (GHSR). Induces the release of growth hormone from the pituitary. Has an appetite-stimulating effect, induces adiposity and stimulates gastric acid secretion. Involved in growth regulation. This Aquarana catesbeiana (American bullfrog) protein is Ghrelin (GHRL).